Consider the following 565-residue polypeptide: Oxygen-dependent choline dehydrogenase (565 aa).

6-35 serves as a coordination point for FAD; sequence DYIIVGAGSAGNTLATRLTEDAGVTVLLLE. The tract at residues 182-201 is disordered; it reads QQEGFGPMDRTVTKNGRRSS. The active-site Proton acceptor is the H475.

This sequence belongs to the GMC oxidoreductase family. It depends on FAD as a cofactor.

It carries out the reaction choline + A = betaine aldehyde + AH2. It catalyses the reaction betaine aldehyde + NAD(+) + H2O = glycine betaine + NADH + 2 H(+). It functions in the pathway amine and polyamine biosynthesis; betaine biosynthesis via choline pathway; betaine aldehyde from choline (cytochrome c reductase route): step 1/1. Functionally, involved in the biosynthesis of the osmoprotectant glycine betaine. Catalyzes the oxidation of choline to betaine aldehyde and betaine aldehyde to glycine betaine at the same rate. In Pseudomonas putida (strain ATCC 47054 / DSM 6125 / CFBP 8728 / NCIMB 11950 / KT2440), this protein is Oxygen-dependent choline dehydrogenase.